A 372-amino-acid chain; its full sequence is MSNQHTLLSSNLLPVGSNISTWWNFGSMLLTCLALQISTGFFLAIHYTANINLAFSSVTHIMRDVPYGWTMQNLHAIGASMFFICIYIHIARGLYYGLYLNKEVWLSGTVLLITLMATAFFGYVLPWGQMSFWAATVITNLLTAIPYLGTTLTTWLWGGFSINDPTLTRFFALHFILPFLIVSLSSIHIILLHNEGSNNPLGTNPDIDKIPFHPYHSYKDILMITVMITTLFSIMAFAPNLFNDPENFSKANPLVTPQHIKPEWYFLFAYGILRSIPNKLGGTLALLMSVIILTTAPFTHTSHIRSMAFRPLAQMLFWTLIATFITITWTATKPVEPPFILISQMASIIYFSFFIINPILGWVENKISMTNS.

4 helical membrane passes run F25–I45, W69–I90, W105–L125, and F170–I190. Positions 75 and 89 each coordinate heme b. Residues H174 and H188 each coordinate heme b. Position 193 (H193) interacts with a ubiquinone. A run of 4 helical transmembrane segments spans residues Y218–A238, L280–H300, L312–T332, and F339–P358.

It belongs to the cytochrome b family. The cytochrome bc1 complex contains 3 respiratory subunits (MT-CYB, CYC1 and UQCRFS1), 2 core proteins (UQCRC1 and UQCRC2) and probably 6 low-molecular weight proteins. Heme b is required as a cofactor.

The protein resides in the mitochondrion inner membrane. In terms of biological role, component of the ubiquinol-cytochrome c reductase complex (complex III or cytochrome b-c1 complex) that is part of the mitochondrial respiratory chain. The b-c1 complex mediates electron transfer from ubiquinol to cytochrome c. Contributes to the generation of a proton gradient across the mitochondrial membrane that is then used for ATP synthesis. This Acanthophis antarcticus (Common death adder) protein is Cytochrome b (MT-CYB).